A 411-amino-acid chain; its full sequence is Immunity-related GTPase family M protein (411 aa).

Residues 1–21 form a disordered region; the sequence is MKPSHKSCEAAPLLPKMPETS. The 177-residue stretch at 77-253 folds into the IRG-type G domain; it reads IPVSIFVTGD…PELRNTLQTD (177 aa). GTP-binding positions include 86–93, 111–115, and 193–195; these read DSGNGMSS, TGVVR, and KLD. Phosphoserine is present on S204. 234 to 236 serves as a coordination point for GTP; sequence SNL. K272 participates in a covalent cross-link: Glycyl lysine isopeptide (Lys-Gly) (interchain with G-Cter in ubiquitin). Residues 352 to 376 form an alpha-K amphipathic helix region; sequence KLRLMTCTTVNALFCLFKFLPCLCH.

It belongs to the TRAFAC class dynamin-like GTPase superfamily. IRG family. In terms of assembly, interacts with ULK1; promoting the coassembly of ULK1 and BECN1. Interacts with BECN1; enhancing BECN1-interacting partners and influencing the composition of the BECN1 complex. Interacts with ATG16L1. Interacts with NOD2; promoting Irgm 'Lys-63'-linked polyubiquitination, which is required for interactions with the core autophagy factors. Interacts with STX17; promoting STX17 recruitment to autophagosomes. Interacts with ATG8 proteins (GABARAP, GABARAPL1, GABARAPL2, MAP1LC3A, MAP1LC3B and MAP1LC3C); promoting STX17 recruitment to autophagosomes. Interacts with TFEB; promoting association between TFEB and PPP3CB and TFEB dephosphorylation. Interacts with PPP3CB; promoting association between TFEB and PPP3CB and TFEB dephosphorylation. Interacts with NLRP3; preventing NLRP3 inflammasome assembly and promoting SQSTM1/p62-dependent autophagic degradation of NLRP3. Interacts with CGAS; promoting SQSTM1/p62-dependent autophagic degradation of CGAS. Interacts with RIGI/RIG-I; promoting SQSTM1/p62-dependent autophagic degradation of RIGI/RIG-I. Interacts with NOD1; promoting SQSTM1/p62-dependent autophagic degradation of RIGI/RIG-I. Interacts with NOD2; promoting SQSTM1/p62-dependent autophagic degradation of RIGI/RIG-I. Interacts with RIPK2; promoting SQSTM1/p62-dependent autophagic degradation of RIGI/RIG-I. Interacts with PIK3CA. Post-translationally, palmitoylated on C-terminal Cys residues. Palmitoylation, together with the alpha-K amphipathic helix, which binds phosphatidylinositol, mediate binding to membranes. Ubiquitinated via 'Lys-63'-linked polyubiquitination in a NOD2-dependent process. 'Lys-63'-linked polyubiquitination is required for interactions with the core autophagy factors. Ubiquitination at Lys-272 by the DCX(WDR77) complex, also named CLR4(WDR77) complex, in intestinal cells, leading to its degradation by the proteasome.

It localises to the golgi apparatus membrane. The protein localises to the cell membrane. The protein resides in the cytoplasmic vesicle. Its subcellular location is the phagosome membrane. It is found in the autophagosome membrane. It localises to the lysosome membrane. The protein localises to the late endosome membrane. The protein resides in the mitochondrion membrane. Its subcellular location is the cell projection. It is found in the phagocytic cup. The enzyme catalyses GTP + H2O = GDP + phosphate + H(+). Functionally, immunity-related GTPase that plays important roles in innate immunity and inflammatory response. Acts as a dynamin-like protein that binds to intracellular membranes and promotes remodeling and trafficking of those membranes. Required for clearance of acute protozoan and bacterial infections by interacting with autophagy and lysosome regulatory proteins, thereby promoting the fusion of phagosomes with lysosomes for efficient degradation of cargo including microbes. Regulates selective autophagy, including xenophagy and mitophagy, both directly and indirectly. Directly regulates autophagy by acting as a molecular adapter that promotes the coassembly of the core autophagy machinery to mediate antimicrobial defense: Irgm (1) activates AMPK, which in turn phosphorylates ULK1 and BECN1 to induce autophagy, (2) promotes the coassembly of ULK1 and BECN1, enhancing BECN1-interacting partners and (3) influences the composition of the BECN1 complex, by competing with the negative regulators BCL2 and RUBCN, to trigger autophagy. Also activates autophagy by promoting recruitment of STX17 to autophagosomes. In collaboration with ATG8 proteins, regulate lysosomal biogenesis, a fundamental process for any autophagic pathway, by promoting TFEB dephosphorylation. Also modulates autophagy by assisting with autophagosome formation and preventing lysosomal deacidification. Regulates autophagy by affecting mitochondrial fusion and fission. Also involved in M1 macrophage activation for the production of proinflammatory cytokines. While activating autophagy, acts as a key negative regulator of the inflammatory and interferon responses both by (1) promoting mitophagy and (2) mediating autophagy-dependent degradation of effectors of the inflammatory response. Promotes degradation of damaged and IFNG/IFN-gamma-stressed mitochondria via mitophagy, preventing cytosolic release of ligands that activate inflammation. Negatively regulates interferon-signaling in hematopoietic stem cells, preserving hematopoietic stem cell number and function. Promotes expansion of activated CD4(+) T-cells by inhibiting IFNG/IFN-gamma signaling, thereby preventing Ifng-mediated cell death of CD4(+) T-cells. Acts as a suppressor of inflammation by promoting recruitment of inflammation effectors, such as CGAS, RIGI/RIG-I and NLRP3, to autophagosome membranes, leading to their SQSTM1/p62-dependent autophagic degradation. Also directly inhibits assembly of the NLRP3 inflammasome by preventing the association between NLRP3 and PYCARD. Acts as a negative regulator of antiviral innate immune response by suppressing the RIPK2-dependent pro-inflammatory response: mediates recruitment of RIPosomes, composed of RIPK2 and NOD1 or NOD2, to autophagosome membranes, promoting their SQSTM1/p62-dependent autophagic degradation. The sequence is that of Immunity-related GTPase family M protein from Rattus norvegicus (Rat).